The chain runs to 272 residues: Type III pantothenate kinase (272 aa).

An ATP-binding site is contributed by 6–13 (NVNNTNTL). Substrate is bound at residue 113–116 (GADR). Asp115 acts as the Proton acceptor in catalysis. Asp135 is a K(+) binding site. Thr138 contributes to the ATP binding site. Thr190 lines the substrate pocket.

The protein belongs to the type III pantothenate kinase family. In terms of assembly, homodimer. NH4(+) serves as cofactor. The cofactor is K(+).

It localises to the cytoplasm. It catalyses the reaction (R)-pantothenate + ATP = (R)-4'-phosphopantothenate + ADP + H(+). It functions in the pathway cofactor biosynthesis; coenzyme A biosynthesis; CoA from (R)-pantothenate: step 1/5. In terms of biological role, catalyzes the phosphorylation of pantothenate (Pan), the first step in CoA biosynthesis. This is Type III pantothenate kinase from Acidobacterium capsulatum (strain ATCC 51196 / DSM 11244 / BCRC 80197 / JCM 7670 / NBRC 15755 / NCIMB 13165 / 161).